The sequence spans 144 residues: Large ribosomal subunit protein uL16 (144 aa).

The protein belongs to the universal ribosomal protein uL16 family. Part of the 50S ribosomal subunit.

Its function is as follows. Binds 23S rRNA and is also seen to make contacts with the A and possibly P site tRNAs. In Bacillus cytotoxicus (strain DSM 22905 / CIP 110041 / 391-98 / NVH 391-98), this protein is Large ribosomal subunit protein uL16.